We begin with the raw amino-acid sequence, 426 residues long: Peptidoglycan DD-endopeptidase ShyB (426 aa).

The first 21 residues, 1-21, serve as a signal peptide directing secretion; sequence MGQFRFLALIVAVLCFSVALF. Residues 32 to 48 show a composition bias toward polar residues; sequence SYSVPLNQSVNTSQPPS. The segment at 32-55 is disordered; sequence SYSVPLNQSVNTSQPPSSEMVPSD. Positions 291, 295, and 372 each coordinate Zn(2+).

Belongs to the peptidase M23B family. Monomer. The cofactor is Zn(2+).

The protein localises to the periplasm. It functions in the pathway cell wall degradation; peptidoglycan degradation. Not inhibited by metal chelator EDTA. Cell wall peptidoglycan (PG) DD-endopeptidase, which may act as a substitute for other zinc-dependent PG endopeptidases (ShyA and ShyC) during zinc starvation. Hydrolyzes peptide cross-links which covalently connect adjacent PG strands probably to allow insertion of new glycans and thus cell wall expansion. Degrades purified whole PG sacculi in vitro. It is unclear how it is able to function in low zinc environments, but that may possibly be due to binding zinc with very high affinity, utilizing an alternative metal cofactor or that it may function independently of a bound metal cofactor. The chain is Peptidoglycan DD-endopeptidase ShyB from Vibrio cholerae serotype O1 (strain ATCC 39315 / El Tor Inaba N16961).